The sequence spans 207 residues: Small ribosomal subunit protein uS4 (207 aa).

Positions 97–165 (SRLDNLVFRM…VKLALESKAV (69 aa)) constitute an S4 RNA-binding domain.

This sequence belongs to the universal ribosomal protein uS4 family. Part of the 30S ribosomal subunit. Contacts protein S5. The interaction surface between S4 and S5 is involved in control of translational fidelity.

Functionally, one of the primary rRNA binding proteins, it binds directly to 16S rRNA where it nucleates assembly of the body of the 30S subunit. With S5 and S12 plays an important role in translational accuracy. The sequence is that of Small ribosomal subunit protein uS4 from Mycoplasmoides gallisepticum (strain R(low / passage 15 / clone 2)) (Mycoplasma gallisepticum).